Here is a 165-residue protein sequence, read N- to C-terminus: E3 ubiquitin ligase complex SCF subunit sconC (165 aa).

The tract at residues 106–165 (ILAANYLDIKALLDVGCKTVANMIKGKSPEEIRKTFNIQNDFTPEEEDQIRRENEWAEDR) is interaction with the F-box domain of F-box proteins.

It belongs to the SKP1 family. Component of the SCF (SKP1-CUL1-F-box protein) E3 ubiquitin ligase complexes.

It functions in the pathway protein modification; protein ubiquitination. Its function is as follows. Essential component of the SCF (SKP1-CUL1-F-box protein) E3 ubiquitin ligase complexes, which mediate the ubiquitination and subsequent proteasomal degradation of target proteins. Controls sulfur metabolite repression, probably by mediating the inactivation or degradation of the metR transcription factor. The protein is E3 ubiquitin ligase complex SCF subunit sconC (sconC) of Arthroderma otae (Microsporum canis).